Here is a 567-residue protein sequence, read N- to C-terminus: Proline--tRNA ligase (567 aa).

The protein belongs to the class-II aminoacyl-tRNA synthetase family. ProS type 1 subfamily. As to quaternary structure, homodimer.

Its subcellular location is the cytoplasm. The catalysed reaction is tRNA(Pro) + L-proline + ATP = L-prolyl-tRNA(Pro) + AMP + diphosphate. Catalyzes the attachment of proline to tRNA(Pro) in a two-step reaction: proline is first activated by ATP to form Pro-AMP and then transferred to the acceptor end of tRNA(Pro). As ProRS can inadvertently accommodate and process non-cognate amino acids such as alanine and cysteine, to avoid such errors it has two additional distinct editing activities against alanine. One activity is designated as 'pretransfer' editing and involves the tRNA(Pro)-independent hydrolysis of activated Ala-AMP. The other activity is designated 'posttransfer' editing and involves deacylation of mischarged Ala-tRNA(Pro). The misacylated Cys-tRNA(Pro) is not edited by ProRS. The protein is Proline--tRNA ligase of Geobacillus sp. (strain WCH70).